The primary structure comprises 379 residues: tRNA-specific 2-thiouridylase MnmA (379 aa).

Residues 16 to 23 (GLSGGVDS) and Met42 contribute to the ATP site. The tract at residues 102–104 (NPD) is interaction with target base in tRNA. Catalysis depends on Cys107, which acts as the Nucleophile. The cysteines at positions 107 and 204 are disulfide-linked. ATP is bound at residue Gly131. Positions 154 to 156 (KDQ) are interaction with tRNA. Cys204 (cysteine persulfide intermediate) is an active-site residue. An interaction with tRNA region spans residues 316–317 (RY).

This sequence belongs to the MnmA/TRMU family.

The protein localises to the cytoplasm. The enzyme catalyses S-sulfanyl-L-cysteinyl-[protein] + uridine(34) in tRNA + AH2 + ATP = 2-thiouridine(34) in tRNA + L-cysteinyl-[protein] + A + AMP + diphosphate + H(+). Catalyzes the 2-thiolation of uridine at the wobble position (U34) of tRNA, leading to the formation of s(2)U34. In Hydrogenovibrio crunogenus (strain DSM 25203 / XCL-2) (Thiomicrospira crunogena), this protein is tRNA-specific 2-thiouridylase MnmA.